Consider the following 209-residue polypeptide: Endoplasmic reticulum vesicle protein 25 (209 aa).

The N-terminal stretch at 1–18 (MKYTTFGIISLFLSVTWA) is a signal peptide. Residues 19-178 (LRFELAASFE…TNESTNRRVR (160 aa)) are Lumenal-facing. Residues 31-119 (PFCIRDFVEA…MRNVEVNIES (89 aa)) enclose the GOLD domain. The chain crosses the membrane as a helical span at residues 179–199 (NFSMAVIVVFAALCAWQLNYL). Over 200–209 (KNYFRAKHII) the chain is Cytoplasmic.

The protein belongs to the EMP24/GP25L family.

It is found in the endoplasmic reticulum membrane. Its subcellular location is the golgi apparatus membrane. Constituent of COPII-coated endoplasmic reticulum-derived transport vesicles. Required for efficient transport of a subset of secretory proteins to the Golgi. Facilitates retrograde transport from the Golgi to the endoplasmic reticulum. The protein is Endoplasmic reticulum vesicle protein 25 (ERV25) of Eremothecium gossypii (strain ATCC 10895 / CBS 109.51 / FGSC 9923 / NRRL Y-1056) (Yeast).